A 911-amino-acid polypeptide reads, in one-letter code: Beta-galactosidase 12 (911 aa).

The N-terminal stretch at 1–25 is a signal peptide; sequence MAARVAAAVAAALLAAALLLPGAAA. Catalysis depends on Glu192, which acts as the Proton donor. Glu262 acts as the Nucleophile in catalysis. 4 N-linked (GlcNAc...) asparagine glycosylation sites follow: Asn263, Asn389, Asn473, and Asn777. An SUEL-type lectin domain is found at 744 to 831; the sequence is EDTSTRGTLN…ATLAVQLLLA (88 aa).

It belongs to the glycosyl hydrolase 35 family.

It is found in the secreted. Its subcellular location is the extracellular space. The protein localises to the apoplast. The enzyme catalyses Hydrolysis of terminal non-reducing beta-D-galactose residues in beta-D-galactosides.. The chain is Beta-galactosidase 12 from Oryza sativa subsp. japonica (Rice).